The chain runs to 235 residues: Small ribosomal subunit protein uS10m (235 aa).

Residues 1-19 (MLRTSVRSPLLYRCLSKRF) constitute a mitochondrion transit peptide.

This sequence belongs to the universal ribosomal protein uS10 family. Part of the mitochondrial small ribosomal subunit.

It localises to the mitochondrion. Its function is as follows. Involved in mitochondrial genome encoded proteins translation. Involved in the binding of tRNA to the ribosomes. In Candida glabrata (strain ATCC 2001 / BCRC 20586 / JCM 3761 / NBRC 0622 / NRRL Y-65 / CBS 138) (Yeast), this protein is Small ribosomal subunit protein uS10m (RSM10).